A 246-amino-acid polypeptide reads, in one-letter code: Cell division protein ZapD (246 aa).

It belongs to the ZapD family. As to quaternary structure, interacts with FtsZ.

It is found in the cytoplasm. Its function is as follows. Cell division factor that enhances FtsZ-ring assembly. Directly interacts with FtsZ and promotes bundling of FtsZ protofilaments, with a reduction in FtsZ GTPase activity. The protein is Cell division protein ZapD of Vibrio parahaemolyticus serotype O3:K6 (strain RIMD 2210633).